A 106-amino-acid chain; its full sequence is Large ribosomal subunit protein eL42 (106 aa).

Belongs to the eukaryotic ribosomal protein eL42 family.

The chain is Large ribosomal subunit protein eL42 (RPL44) from Debaryomyces hansenii (strain ATCC 36239 / CBS 767 / BCRC 21394 / JCM 1990 / NBRC 0083 / IGC 2968) (Yeast).